Here is a 264-residue protein sequence, read N- to C-terminus: Small ribosomal subunit protein eS1 (264 aa).

Position 34 is an N6-acetyllysine; alternate (lysine 34). Residue lysine 34 forms a Glycyl lysine isopeptide (Lys-Gly) (interchain with G-Cter in SUMO2); alternate linkage. Lysine 56 is modified (N6-acetyllysine). ADP-ribosyltyrosine is present on tyrosine 155. The segment at 232 to 264 (HGEGGSSGKTTGDETGAKVERADGYEPPVQESV) is disordered. Residue serine 237 is modified to Phosphoserine. A compositionally biased stretch (basic and acidic residues) spans 242-255 (TGDETGAKVERADG). Lysine 249 is modified (N6-acetyllysine; alternate). Residue lysine 249 forms a Glycyl lysine isopeptide (Lys-Gly) (interchain with G-Cter in SUMO2); alternate linkage. Tyrosine 256 is modified (phosphotyrosine). Position 263 is a phosphoserine (serine 263).

Belongs to the eukaryotic ribosomal protein eS1 family. Component of the small ribosomal subunit. Mature ribosomes consist of a small (40S) and a large (60S) subunit. The 40S subunit contains about 33 different proteins and 1 molecule of RNA (18S). The 60S subunit contains about 49 different proteins and 3 molecules of RNA (28S, 5.8S and 5S). Identified in a IGF2BP1-dependent mRNP granule complex containing untranslated mRNAs. Binds with high affinity to IPO4. Interacts with DDIT3. Part of the small subunit (SSU) processome, composed of more than 70 proteins and the RNA chaperone small nucleolar RNA (snoRNA) U3. The protein designated S3b has the same amino acid sequence as S3a except that it lacks the C-terminal 12 residues. It is probable that S3a is converted by proteolysis, either physiologically or fortuitously, to S3b. In terms of processing, ADP-ribosylated at Tyr-155 by PARP1 in presence of HPF1.

It is found in the cytoplasm. The protein localises to the nucleus. Its subcellular location is the nucleolus. Functionally, component of the small ribosomal subunit. The ribosome is a large ribonucleoprotein complex responsible for the synthesis of proteins in the cell. Part of the small subunit (SSU) processome, first precursor of the small eukaryotic ribosomal subunit. During the assembly of the SSU processome in the nucleolus, many ribosome biogenesis factors, an RNA chaperone and ribosomal proteins associate with the nascent pre-rRNA and work in concert to generate RNA folding, modifications, rearrangements and cleavage as well as targeted degradation of pre-ribosomal RNA by the RNA exosome. May play a role during erythropoiesis through regulation of transcription factor DDIT3. The protein is Small ribosomal subunit protein eS1 (Rps3a) of Rattus norvegicus (Rat).